Reading from the N-terminus, the 129-residue chain is Small ribosomal subunit protein uS11c (129 aa).

It belongs to the universal ribosomal protein uS11 family. In terms of assembly, part of the 30S ribosomal subunit.

It localises to the plastid. The protein resides in the chloroplast. The polypeptide is Small ribosomal subunit protein uS11c (Gracilaria tenuistipitata var. liui (Red alga)).